The sequence spans 317 residues: 4-hydroxy-3-methylbut-2-enyl diphosphate reductase (317 aa).

Cys12 serves as a coordination point for [4Fe-4S] cluster. Residues His41 and His74 each contribute to the (2E)-4-hydroxy-3-methylbut-2-enyl diphosphate site. His41 and His74 together coordinate dimethylallyl diphosphate. 2 residues coordinate isopentenyl diphosphate: His41 and His74. A [4Fe-4S] cluster-binding site is contributed by Cys97. His125 lines the (2E)-4-hydroxy-3-methylbut-2-enyl diphosphate pocket. His125 lines the dimethylallyl diphosphate pocket. An isopentenyl diphosphate-binding site is contributed by His125. Glu127 serves as the catalytic Proton donor. Residue Thr168 participates in (2E)-4-hydroxy-3-methylbut-2-enyl diphosphate binding. Cys198 is a [4Fe-4S] cluster binding site. Ser226, Ser227, Asn228, and Ser270 together coordinate (2E)-4-hydroxy-3-methylbut-2-enyl diphosphate. Residues Ser226, Ser227, Asn228, and Ser270 each coordinate dimethylallyl diphosphate. Residues Ser226, Ser227, Asn228, and Ser270 each contribute to the isopentenyl diphosphate site.

This sequence belongs to the IspH family. In terms of assembly, homodimer. [4Fe-4S] cluster serves as cofactor.

It carries out the reaction isopentenyl diphosphate + 2 oxidized [2Fe-2S]-[ferredoxin] + H2O = (2E)-4-hydroxy-3-methylbut-2-enyl diphosphate + 2 reduced [2Fe-2S]-[ferredoxin] + 2 H(+). It catalyses the reaction dimethylallyl diphosphate + 2 oxidized [2Fe-2S]-[ferredoxin] + H2O = (2E)-4-hydroxy-3-methylbut-2-enyl diphosphate + 2 reduced [2Fe-2S]-[ferredoxin] + 2 H(+). The protein operates within isoprenoid biosynthesis; dimethylallyl diphosphate biosynthesis; dimethylallyl diphosphate from (2E)-4-hydroxy-3-methylbutenyl diphosphate: step 1/1. It participates in isoprenoid biosynthesis; isopentenyl diphosphate biosynthesis via DXP pathway; isopentenyl diphosphate from 1-deoxy-D-xylulose 5-phosphate: step 6/6. Functionally, catalyzes the conversion of 1-hydroxy-2-methyl-2-(E)-butenyl 4-diphosphate (HMBPP) into a mixture of isopentenyl diphosphate (IPP) and dimethylallyl diphosphate (DMAPP). Acts in the terminal step of the DOXP/MEP pathway for isoprenoid precursor biosynthesis. This chain is 4-hydroxy-3-methylbut-2-enyl diphosphate reductase, found in Edwardsiella ictaluri (strain 93-146).